The chain runs to 598 residues: Fumarate reductase flavoprotein subunit (598 aa).

FAD is bound by residues 12 to 16 (GAGGA), 36 to 38 (ISK), 44 to 52 (SHTVAAEGG), 156 to 158 (HFV), and Asp212. Residue His45 is modified to Tele-8alpha-FAD histidine. Active-site residues include His233 and Arg249. Residues 356–357 (HY), Glu380, and 391–397 (RLGSNSL) contribute to the FAD site. The interval 577–598 (AKRVYGGEADAQEKSDKEQANG) is disordered. Positions 587–598 (AQEKSDKEQANG) are enriched in basic and acidic residues.

It belongs to the FAD-dependent oxidoreductase 2 family. FRD/SDH subfamily. In terms of assembly, part of an enzyme complex containing four subunits: a flavoprotein (FrdA), an iron-sulfur protein (FrdB), and two hydrophobic anchor proteins (FrdC and FrdD). Interacts with SdhE. The cofactor is FAD.

It localises to the cell inner membrane. It carries out the reaction a quinone + succinate = fumarate + a quinol. The enzyme catalyses a menaquinone + succinate = a menaquinol + fumarate. In terms of biological role, two distinct, membrane-bound, FAD-containing enzymes are responsible for the catalysis of fumarate and succinate interconversion; the fumarate reductase is used in anaerobic growth, and the succinate dehydrogenase is used in aerobic growth. In Serratia sp. (strain ATCC 39006) (Prodigiosinella confusarubida), this protein is Fumarate reductase flavoprotein subunit.